The sequence spans 207 residues: Pyridoxal 5'-phosphate synthase subunit PdxT (207 aa).

51 to 53 (GES) is an L-glutamine binding site. C83 serves as the catalytic Nucleophile. L-glutamine-binding positions include R112 and 143–144 (IR). Active-site charge relay system residues include H184 and E186.

It belongs to the glutaminase PdxT/SNO family. In the presence of PdxS, forms a dodecamer of heterodimers. Only shows activity in the heterodimer.

The enzyme catalyses aldehydo-D-ribose 5-phosphate + D-glyceraldehyde 3-phosphate + L-glutamine = pyridoxal 5'-phosphate + L-glutamate + phosphate + 3 H2O + H(+). It catalyses the reaction L-glutamine + H2O = L-glutamate + NH4(+). It functions in the pathway cofactor biosynthesis; pyridoxal 5'-phosphate biosynthesis. Functionally, catalyzes the hydrolysis of glutamine to glutamate and ammonia as part of the biosynthesis of pyridoxal 5'-phosphate. The resulting ammonia molecule is channeled to the active site of PdxS. In Kineococcus radiotolerans (strain ATCC BAA-149 / DSM 14245 / SRS30216), this protein is Pyridoxal 5'-phosphate synthase subunit PdxT.